A 635-amino-acid chain; its full sequence is Threonine--tRNA ligase (635 aa).

The region spanning 1 to 62 (MITITLPDGS…EHDAMLRIIT (62 aa)) is the TGS domain. A catalytic region spans residues 244–535 (DHRKIGKVQD…LIEHYAGIWP (292 aa)). Positions 335, 386, and 512 each coordinate Zn(2+).

It belongs to the class-II aminoacyl-tRNA synthetase family. In terms of assembly, homodimer. Zn(2+) serves as cofactor.

It localises to the cytoplasm. The enzyme catalyses tRNA(Thr) + L-threonine + ATP = L-threonyl-tRNA(Thr) + AMP + diphosphate + H(+). Catalyzes the attachment of threonine to tRNA(Thr) in a two-step reaction: L-threonine is first activated by ATP to form Thr-AMP and then transferred to the acceptor end of tRNA(Thr). Also edits incorrectly charged L-seryl-tRNA(Thr). The protein is Threonine--tRNA ligase of Xylella fastidiosa (strain 9a5c).